Consider the following 280-residue polypeptide: DegV domain-containing protein CA_C1624 (280 aa).

A DegV domain is found at 4–279 (IALITDSTSD…PGLLGVVIFK (276 aa)). T60 and S93 together coordinate hexadecanoate.

Functionally, may bind long-chain fatty acids, such as palmitate, and may play a role in lipid transport or fatty acid metabolism. This is DegV domain-containing protein CA_C1624 from Clostridium acetobutylicum (strain ATCC 824 / DSM 792 / JCM 1419 / IAM 19013 / LMG 5710 / NBRC 13948 / NRRL B-527 / VKM B-1787 / 2291 / W).